We begin with the raw amino-acid sequence, 299 residues long: Delta-9 desaturase-like 5 protein (299 aa).

The next 2 helical transmembrane spans lie at 31–51 (ADII…LAPF) and 55–75 (WEAL…ITFS). The Histidine box-1 signature appears at 77-82 (HRNLAH). A Histidine box-2 motif is present at residues 114–118 (HRFHH). The next 2 membrane-spanning stretches (helical) occupy residues 174–194 (IGFH…LPYL) and 199–219 (GVGG…CHIW). Positions 246 to 250 (HNNHH) match the Histidine box-3 motif.

It belongs to the fatty acid desaturase type 1 family. The cofactor is Fe cation.

The protein localises to the endoplasmic reticulum membrane. It functions in the pathway lipid metabolism; polyunsaturated fatty acid biosynthesis. This chain is Delta-9 desaturase-like 5 protein, found in Arabidopsis thaliana (Mouse-ear cress).